The sequence spans 111 residues: Putative lipid-binding protein AIR1 (111 aa).

Positions 1–23 (MAPRTPLALFVSLNLLFFTYTSA) are cleaved as a signal peptide. Intrachain disulfides connect Cys28–Cys58, Cys38–Cys57, and Cys74–Cys110.

Belongs to the plant LTP family. PEARLI1 subfamily.

It localises to the secreted. In Arabidopsis thaliana (Mouse-ear cress), this protein is Putative lipid-binding protein AIR1 (AIR1).